A 1160-amino-acid polypeptide reads, in one-letter code: MPDLIQTKSVVLGYGVKMVLAPAKAARSLLIREEAVWRFSLPRVLSTPTTMLETTEPIAHASELDKPSIVVTNTEVDSEDNTSSVLGRYIPQKCLQNARLAAVNSCVNEIFEARFRERPDAPAVCAWDGSYTYRELNDRSSALAHKLRRRGVQAEVLVALLFEKSKFSVVAMHAVIKAGGAFQLWDPSLPVARLGGMFAESKAHLVLASAANARLAAEISENVMVVDESLVPPWESAPLNPGTQPENALYCVFTSGSTGKPKGFLMDHRAFCTCALGVGELLGLNGASRLIQFSANSFDLATFDHILPFLCGACLCIPSEEERKGDLTRAFNRYRATHAVLTPTVSRLLEPEKLTTLQVLLLAGEAPSREDIRRWASTVGLLNGYSPAEAGCITIVNPSLQESHPSKIGFPVSVVPWVVDPDDCNRLVPAGEVGELVLQGHTLARGYFGRPDQSKAAFIPTPAWVRQFGYETYGRLYRTGDLVRFDAEDESLVYIGRKDSQVKIRGQRLELGEVEHALQQFFPRPQIVVVELLTAEDREPALVGFVYQPGSSQHMPAPPQHQDNSLFLVADDQFCADAQKALASLRDILPPYMIPSDLLRISHLPMVPSGKTDRRLIRMRAVDLAPEERRKYSSVLGQSRDQPVTQLEESLLGLWATCLKLPPSQIGVLDNFFHLGGGSLEAIHLAAEARNMGFAELSSAAVFQCPTIREMAGMLDGVTASVQEQDPRGCTSFQLESSLVAELLRKSQCTLEDLQEGFLPLTPFQEKTAKMKPMHLLLDIPGIDHSRLEAAWALVLEKHISFRSIYVEHQGRVYQAFLRQPDTVSIPIRWCDEPVHECAARFCEQDVDLILDGRPWWSMTRINNKIDSVLVLRLTHAQWDALTLDVLFKDFMAAYESRELSRRDLEFPAYMRFRLRHNASPATVRFWSTFLHGSRLTQPLLLDGAAEVDPGNEAMVFVSQQIPMLTPPHGITLGSVFRAAWAFVLARYTGQEDVVFGEFVEGRSLLVKSVEKVTGCAAAETPMRIVVSPTASVRDLLKHSQEQYVARIPYETCELEDIVPSSTSWPTDTTFNHILVIQHEPVLPPVALDGRPCPHRWAFHGRLEDVYVQMVFGPDTLHVGMSGPEIRLSRTIATQLVEKLASTITQFNDRPEALLSEITV.

The tract at residues 132–520 (TYRELNDRSS…LGEVEHALQQ (389 aa)) is adenylation. The Carrier domain maps to 642 to 719 (QPVTQLEESL…EMAGMLDGVT (78 aa)). Ser-679 carries the O-(pantetheine 4'-phosphoryl)serine modification. The tract at residues 749–1025 (CTLEDLQEGF…CAAAETPMRI (277 aa)) is condensation.

It belongs to the NRP synthetase family. Interacts with the mitogen-activated protein kinase mpkA. Phosphorylated by mpkA during conidiogenesis.

The protein resides in the cytoplasm. It participates in alkaloid biosynthesis. Its function is as follows. Nonribosomal peptide synthetase; part of the gene cluster that mediates the biosynthesis of the antitumor fumiquinazolines that confer a dual-usage capability to defend against phagocytes in the environment and animal hosts. The simplest member is fumiquinazoline F (FQF) with a 6-6-6 tricyclic core derived from anthranilic acid (Ant), tryptophan (Trp), and alanine (Ala). The trimodular NRPS fmqA is responsible for FQF formation. Modules 1, 2 and 3 of fmqA are predicted to activate and load Ant, Trp and Ala, respectively, providing for the assembly of an Ant-Trp-Ala-S-enzyme intermediate that would undergo double cyclization for chain release and generation of the tricyclic 6-6-6 product fumiquinazoline F. The presence of an E domain predicted for module 2 of fmqA is consistent with epimerization of L-Trp to D-Trp during assembly to generate the R-stereocenter at C14 of FQF. The FAD-dependent monooxygenase fmqB and the monomodular NRPS fmqC then maturate FQF to FQA. FmqB oxidizes the 2',3'-double bond of the indole side chain of FQF, and fmqC activates L-Ala as the adenylate, installs it as the pantetheinyl thioester on its carrier protein domain, and acylates the oxidized indole for subsequent intramolecular cyclization to create the 6-5-5-imidazolindolone of FQA. The FAD-linked oxidoreductase fmqD introduces a third layer of scaffold complexity by converting FQA to the spirohemiaminal FQC, presumably by catalyzing the formation of a transient imine within the pyrazinone ring. FQC subsequently converts nonenzymatically to the known cyclic aminal FQD. This chain is Nonribosomal peptide synthetase fmqC, found in Aspergillus fumigatus (strain ATCC MYA-4609 / CBS 101355 / FGSC A1100 / Af293) (Neosartorya fumigata).